Consider the following 353-residue polypeptide: Photosystem II protein D1 (353 aa).

Position 2 is an N-acetylthreonine (threonine 2). Threonine 2 carries the phosphothreonine modification. 3 helical membrane-spanning segments follow: residues 29-46 (YIGWFGVLMIPTLLTATS), 118-133 (HFLLGVACYMGREWEL), and 142-156 (WIAVAYSAPVAAATA). Residue histidine 118 coordinates chlorophyll a. Tyrosine 126 contacts pheophytin a. Residues aspartate 170 and glutamate 189 each coordinate [CaMn4O5] cluster. Residues 197 to 218 (FHMLGVAGVFGGSLFSAMHGSL) form a helical membrane-spanning segment. Histidine 198 contacts chlorophyll a. A quinone is bound by residues histidine 215 and 264–265 (SF). Residue histidine 215 participates in Fe cation binding. Fe cation is bound at residue histidine 272. Residues 274-288 (FLAAWPVVGIWFTAL) form a helical membrane-spanning segment. Histidine 332, glutamate 333, aspartate 342, and alanine 344 together coordinate [CaMn4O5] cluster. Positions 345-353 (AVEAPSING) are excised as a propeptide.

It belongs to the reaction center PufL/M/PsbA/D family. In terms of assembly, PSII is composed of 1 copy each of membrane proteins PsbA, PsbB, PsbC, PsbD, PsbE, PsbF, PsbH, PsbI, PsbJ, PsbK, PsbL, PsbM, PsbT, PsbX, PsbY, PsbZ, Psb30/Ycf12, at least 3 peripheral proteins of the oxygen-evolving complex and a large number of cofactors. It forms dimeric complexes. The D1/D2 heterodimer binds P680, chlorophylls that are the primary electron donor of PSII, and subsequent electron acceptors. It shares a non-heme iron and each subunit binds pheophytin, quinone, additional chlorophylls, carotenoids and lipids. D1 provides most of the ligands for the Mn4-Ca-O5 cluster of the oxygen-evolving complex (OEC). There is also a Cl(-1) ion associated with D1 and D2, which is required for oxygen evolution. The PSII complex binds additional chlorophylls, carotenoids and specific lipids. is required as a cofactor. Post-translationally, tyr-161 forms a radical intermediate that is referred to as redox-active TyrZ, YZ or Y-Z. C-terminally processed by CTPA; processing is essential to allow assembly of the oxygen-evolving complex and thus photosynthetic growth.

It is found in the plastid. Its subcellular location is the chloroplast thylakoid membrane. The enzyme catalyses 2 a plastoquinone + 4 hnu + 2 H2O = 2 a plastoquinol + O2. Photosystem II (PSII) is a light-driven water:plastoquinone oxidoreductase that uses light energy to abstract electrons from H(2)O, generating O(2) and a proton gradient subsequently used for ATP formation. It consists of a core antenna complex that captures photons, and an electron transfer chain that converts photonic excitation into a charge separation. The D1/D2 (PsbA/PsbD) reaction center heterodimer binds P680, the primary electron donor of PSII as well as several subsequent electron acceptors. This chain is Photosystem II protein D1, found in Medicago sativa (Alfalfa).